The primary structure comprises 283 residues: Pantothenate synthetase (283 aa).

34 to 41 (MGALHDGH) is a binding site for ATP. Catalysis depends on histidine 41, which acts as the Proton donor. Position 65 (glutamine 65) interacts with (R)-pantoate. Glutamine 65 contacts beta-alanine. 152–155 (GSKD) provides a ligand contact to ATP. (R)-pantoate is bound at residue glutamine 158. ATP contacts are provided by residues valine 181 and 189-192 (MSSR).

This sequence belongs to the pantothenate synthetase family. In terms of assembly, homodimer.

The protein resides in the cytoplasm. It catalyses the reaction (R)-pantoate + beta-alanine + ATP = (R)-pantothenate + AMP + diphosphate + H(+). Its pathway is cofactor biosynthesis; (R)-pantothenate biosynthesis; (R)-pantothenate from (R)-pantoate and beta-alanine: step 1/1. Catalyzes the condensation of pantoate with beta-alanine in an ATP-dependent reaction via a pantoyl-adenylate intermediate. This chain is Pantothenate synthetase, found in Rhodopseudomonas palustris (strain ATCC BAA-98 / CGA009).